Reading from the N-terminus, the 86-residue chain is Anti-adapter protein IraP (86 aa).

A coiled-coil region spans residues 1 to 36 (MKNLIAELLFKLAQKEEESKELCAQVEALEIIVTAM).

Belongs to the IraP family. In terms of assembly, interacts with RssB.

The protein resides in the cytoplasm. Functionally, inhibits RpoS proteolysis by regulating RssB activity, thereby increasing the stability of the sigma stress factor RpoS especially during phosphate starvation, but also in stationary phase and during nitrogen starvation. Its effect on RpoS stability is due to its interaction with RssB, which probably blocks the interaction of RssB with RpoS, and the consequent delivery of the RssB-RpoS complex to the ClpXP protein degradation pathway. The polypeptide is Anti-adapter protein IraP (Shigella flexneri serotype 5b (strain 8401)).